The primary structure comprises 788 residues: Cap-specific mRNA (nucleoside-2'-O-)-methyltransferase 1 (788 aa).

The G-patch domain maps to 25–71 (YSNKAMEMMKKMGYENDKGLGKSNQGRLEPIIAVQQDGRRGFGLKLD). Residues 143-147 (KTVFD) and Arg-158 each bind substrate. Residues 171 to 384 (IFLNRAAVKM…ERYLVCKYKR (214 aa)) enclose the RrmJ-type SAM-dependent 2'-O-MTase domain. Residue Asn-174 participates in S-adenosyl-L-methionine binding. Lys-179 is an active-site residue. 215–221 (CAGPGGF) lines the S-adenosyl-L-methionine pocket. Asp-298 is a catalytic residue. Substrate is bound at residue 308-310 (NIQ). Lys-338 acts as the Proton acceptor in catalysis. Asn-373 provides a ligand contact to substrate.

Interacts (via C-terminus) with r2d2 (via C-terminus).

It localises to the nucleus. The protein resides in the cytoplasm. The enzyme catalyses a 5'-end (N(7)-methyl 5'-triphosphoguanosine)-ribonucleoside in mRNA + S-adenosyl-L-methionine = a 5'-end (N(7)-methyl 5'-triphosphoguanosine)-(2'-O-methyl-ribonucleoside) in mRNA + S-adenosyl-L-homocysteine + H(+). In terms of biological role, S-adenosyl-L-methionine-dependent methyltransferase that mediates mRNA cap1 2'-O-ribose methylation to the 5'-cap structure of mRNAs. Methylates the ribose of the first nucleotide of a m(7)GpppG-capped mRNA to produce m(7)GpppNmp (cap1). Positively regulates the Ago2-dependent small RNA pathway, with roles in both siRNA biogenesis and RISC assembly. Involved in facilitating conversion of pre-RISC into holo-RISC, possibly by promoting the unwinding of Ago2-bound siRNA duplexes and thus the retention of the guide strand in holo-RISC. This chain is Cap-specific mRNA (nucleoside-2'-O-)-methyltransferase 1, found in Drosophila melanogaster (Fruit fly).